A 232-amino-acid polypeptide reads, in one-letter code: 6-hydroxymethyl-7,8-dihydropterin pyrophosphokinase (232 aa).

It belongs to the archaeal 6-HMPDK family. Requires Mg(2+) as cofactor.

The enzyme catalyses 6-hydroxymethyl-7,8-dihydropterin + ATP = (7,8-dihydropterin-6-yl)methyl diphosphate + AMP + H(+). Its pathway is cofactor biosynthesis; 5,6,7,8-tetrahydromethanopterin biosynthesis. In terms of biological role, catalyzes the transfer of diphosphate from ATP to 6-hydroxymethyl-7,8-dihydropterin (6-HMD), leading to 6-hydroxymethyl-7,8-dihydropterin diphosphate (6-HMDP). The chain is 6-hydroxymethyl-7,8-dihydropterin pyrophosphokinase from Methanothermobacter thermautotrophicus (strain ATCC 29096 / DSM 1053 / JCM 10044 / NBRC 100330 / Delta H) (Methanobacterium thermoautotrophicum).